The following is a 164-amino-acid chain: Thiol peroxidase (164 aa).

Positions 16 to 162 (LQVGDIAKDF…YEAAINAAKI (147 aa)) constitute a Thioredoxin domain. Catalysis depends on cysteine 58, which acts as the Cysteine sulfenic acid (-SOH) intermediate. Cysteine 58 and cysteine 92 are oxidised to a cystine.

Belongs to the peroxiredoxin family. Tpx subfamily. As to quaternary structure, homodimer.

The enzyme catalyses a hydroperoxide + [thioredoxin]-dithiol = an alcohol + [thioredoxin]-disulfide + H2O. In terms of biological role, thiol-specific peroxidase that catalyzes the reduction of hydrogen peroxide and organic hydroperoxides to water and alcohols, respectively. Plays a role in cell protection against oxidative stress by detoxifying peroxides. The polypeptide is Thiol peroxidase (Streptococcus agalactiae serotype V (strain ATCC BAA-611 / 2603 V/R)).